The sequence spans 413 residues: MKIYLVGGAVRDALLGLPVKDKDWVVVGATPQEMLDAGYQQVGRDFPVFLHPQTHEEYALARTERKSGSGYTGFTCYTAPDVTLEADLQRRDLTINALARDDDGQIIDPYHGRRDLEARLLRHVSPAFGEDPLRVLRVARFAARYAHLSFRIADETLALMREMTAAGELEHLTPERVWKETENALTTRNPQVYFQVLRDCGALRVLFPEIDALFGVPAPAKWHPEIDTGVHTLMTLSMAAMLSPQLDVRFATLCHDLGKGLTPKNLWPRHHGHGPAGVKLVEQLCQRLRVPNDLRDLAKLVAEYHDLIHTFPILQPKTIVKLFDAIDAWRKPQRVEQIALTSEADVRGRTGFEASDYPQGRWLREAWQVAQAVPTKEVVEAGFKGIEIREELTKRRIAAVANWKEKRCPNPAS.

The ATP site is built by Gly-8 and Arg-11. 2 residues coordinate CTP: Gly-8 and Arg-11. 2 residues coordinate Mg(2+): Asp-21 and Asp-23. 3 residues coordinate ATP: Arg-91, Arg-137, and Arg-140. Positions 91, 137, and 140 each coordinate CTP. Positions 228–329 constitute an HD domain; it reads TGVHTLMTLS…VKLFDAIDAW (102 aa).

Belongs to the tRNA nucleotidyltransferase/poly(A) polymerase family. Bacterial CCA-adding enzyme type 1 subfamily. As to quaternary structure, monomer. Can also form homodimers and oligomers. The cofactor is Mg(2+). Requires Ni(2+) as cofactor.

The catalysed reaction is a tRNA precursor + 2 CTP + ATP = a tRNA with a 3' CCA end + 3 diphosphate. It carries out the reaction a tRNA with a 3' CCA end + 2 CTP + ATP = a tRNA with a 3' CCACCA end + 3 diphosphate. Catalyzes the addition and repair of the essential 3'-terminal CCA sequence in tRNAs without using a nucleic acid template. Adds these three nucleotides in the order of C, C, and A to the tRNA nucleotide-73, using CTP and ATP as substrates and producing inorganic pyrophosphate. tRNA 3'-terminal CCA addition is required both for tRNA processing and repair. Also involved in tRNA surveillance by mediating tandem CCA addition to generate a CCACCA at the 3' terminus of unstable tRNAs. While stable tRNAs receive only 3'-terminal CCA, unstable tRNAs are marked with CCACCA and rapidly degraded. This chain is Multifunctional CCA protein, found in Salmonella paratyphi A (strain ATCC 9150 / SARB42).